The chain runs to 296 residues: uncharacterized protein (296 aa).

CBS domains lie at 176 to 232 and 236 to 292; these read GIKE…DKKV and MRRD…KFPE.

This is an uncharacterized protein from Methanocaldococcus jannaschii (strain ATCC 43067 / DSM 2661 / JAL-1 / JCM 10045 / NBRC 100440) (Methanococcus jannaschii).